Here is a 1439-residue protein sequence, read N- to C-terminus: Myomesin-3 (1439 aa).

Residues 1-57 (MTLPHSPGSAGEPQASQTVQVHRLEHRQEEEQKEERQHSLQMGSSVQRRTYRSSEEE) form a disordered region. Positions 22–38 (HRLEHRQEEEQKEERQH) are enriched in basic and acidic residues. The span at 39–48 (SLQMGSSVQR) shows a compositional bias: polar residues. Residues 119 to 149 (QRLLRQRRDWKALRQRTEEKVREAKELIELC) are a coiled coil. Ig-like C2-type domains lie at 154-246 (PWFW…AKVL) and 269-362 (PSAE…AYVF). Fibronectin type-III domains are found at residues 376 to 471 (SPLN…TGDY), 504 to 599 (APTN…LKGK), 605 to 698 (PPAQ…VKQA), 704 to 799 (APYD…CKEW), and 806 to 901 (PPYD…LEDK). Ig-like C2-type domains follow at residues 1122–1207 (PYFQ…LDLT) and 1336–1425 (AKVV…VTIS).

As to quaternary structure, homodimer. Mainly expressed in slow muscle, extraocular muscle and embryonic/neonatal skeletal muscle (at protein level). Expression in skeletal muscle is fiber type specific, with the highest levels in type IIA fibers (intermediate speed) and lower levels in type I fibers.

Its subcellular location is the cytoplasm. The protein resides in the myofibril. The protein localises to the sarcomere. It is found in the m line. In terms of biological role, may link the intermediate filament cytoskeleton to the M-disk of the myofibrils in striated muscle. The sequence is that of Myomesin-3 (Myom3) from Mus musculus (Mouse).